Reading from the N-terminus, the 677-residue chain is Pre-mRNA-splicing factor CLF1 (677 aa).

HAT repeat units follow at residues 52-84 (EYQG…WELE), 86-118 (KEFR…AEMK), 120-152 (RNIN…MEEM), 154-185 (GNIP…LEKR), 187-218 (NEFD…FEEE), 220-255 (GTSD…YEAK), 257-291 (KEFE…FEKQ), 301-333 (VILS…LEES), 335-369 (GDVE…LWIF), 379-415 (KDME…FEIR), 417-448 (MDLQ…LERQ), 450-482 (FEFV…LERG), 484-518 (DDID…FEEY), 520-551 (GEYD…FEIN), 570-608 (EAKR…FEQT), and 613-646 (DDIA…YMFP).

It belongs to the crooked-neck family. As to quaternary structure, associated with the spliceosome.

It localises to the nucleus. Involved in pre-mRNA splicing and cell cycle progression. Required for the spliceosome assembly and initiation of the DNA replication. This chain is Pre-mRNA-splicing factor CLF1 (CLF1), found in Paracoccidioides brasiliensis.